Reading from the N-terminus, the 497-residue chain is Glycerol kinase (497 aa).

Thr-12 provides a ligand contact to ADP. 3 residues coordinate ATP: Thr-12, Thr-13, and Ser-14. Position 12 (Thr-12) interacts with sn-glycerol 3-phosphate. Residue Arg-16 participates in ADP binding. 4 residues coordinate sn-glycerol 3-phosphate: Arg-82, Glu-83, Tyr-134, and Asp-243. Residues Arg-82, Glu-83, Tyr-134, Asp-243, and Gln-244 each coordinate glycerol. Thr-265 and Gly-308 together coordinate ADP. The ATP site is built by Thr-265, Gly-308, Gln-312, and Gly-409. 2 residues coordinate ADP: Gly-409 and Asn-413.

The protein belongs to the FGGY kinase family.

It catalyses the reaction glycerol + ATP = sn-glycerol 3-phosphate + ADP + H(+). It participates in polyol metabolism; glycerol degradation via glycerol kinase pathway; sn-glycerol 3-phosphate from glycerol: step 1/1. Inhibited by fructose 1,6-bisphosphate (FBP). Functionally, key enzyme in the regulation of glycerol uptake and metabolism. Catalyzes the phosphorylation of glycerol to yield sn-glycerol 3-phosphate. The polypeptide is Glycerol kinase (Nitratidesulfovibrio vulgaris (strain ATCC 29579 / DSM 644 / CCUG 34227 / NCIMB 8303 / VKM B-1760 / Hildenborough) (Desulfovibrio vulgaris)).